We begin with the raw amino-acid sequence, 1898 residues long: Receptor-type tyrosine-protein phosphatase F (1898 aa).

The N-terminal stretch at 1 to 29 (MAPEPAPGRRMVPLVPALVMLGLMAGAHG) is a signal peptide. The Extracellular portion of the chain corresponds to 30–1254 (DSKPVFVKVP…QQQEEPEMLW (1225 aa)). Ig-like C2-type domains are found at residues 33 to 123 (PVFV…AKLS), 135 to 224 (PTID…ANLY), and 232 to 314 (PRFS…AQVT). A disulfide bridge links cysteine 54 with cysteine 107. Heparin is bound at residue 68 to 77 (KKGKKVSSQR). The N-linked (GlcNAc...) asparagine glycan is linked to asparagine 117. The cysteines at positions 156 and 207 are disulfide-linked. Residues asparagine 250 and asparagine 295 are each glycosylated (N-linked (GlcNAc...) asparagine). The cysteines at positions 253 and 298 are disulfide-linked. 8 Fibronectin type-III domains span residues 321 to 411 (PPID…TGEQ), 416 to 510 (PPRR…TQQG), 514 to 604 (QPAD…TAQS), 609 to 706 (PPQK…TDED), 711 to 810 (PPRK…TTGA), 811 to 904 (VPGR…TPED), 909 to 1001 (FPQN…TMPV), and 1005 to 1089 (FAKN…TAPD). The interval 693–712 (GPESSPVLVRTDEDVPSGPP) is disordered. An N-linked (GlcNAc...) asparagine glycan is attached at asparagine 721. N-linked (GlcNAc...) asparagine glycosylation is found at asparagine 941, asparagine 957, and asparagine 960. A helical membrane pass occupies residues 1255–1275 (VTGPVLAVILIILIVIAILLF). At 1276 to 1898 (KRKRTHSPSS…YLGSFDHYAT (623 aa)) the chain is on the cytoplasmic side. A Phosphoserine modification is found at serine 1296. Tyrosine-protein phosphatase domains lie at 1343 to 1598 (FSQE…LLEA) and 1630 to 1889 (MELE…ALEY). Substrate contacts are provided by residues aspartate 1507, 1539-1545 (CSAGVGR), and glutamine 1583. Residue cysteine 1539 is the Phosphocysteine intermediate of the active site. The active-site Phosphocysteine intermediate is cysteine 1830.

Belongs to the protein-tyrosine phosphatase family. Receptor class 2A subfamily. In terms of assembly, interacts with GRIP1. Interacts with PPFIA1, PPFIA2 and PPFIA3. Interacts with PTPRF. In terms of tissue distribution, expressed in the cell of the T lineage but not in cells of any other hemopoietic lineage.

The protein resides in the membrane. The enzyme catalyses O-phospho-L-tyrosyl-[protein] + H2O = L-tyrosyl-[protein] + phosphate. Possible cell adhesion receptor. It possesses an intrinsic protein tyrosine phosphatase activity (PTPase) and dephosphorylates EPHA2 regulating its activity. The protein is Receptor-type tyrosine-protein phosphatase F (Ptprf) of Mus musculus (Mouse).